The primary structure comprises 273 residues: Bifunctional protein FolD (273 aa).

NADP(+)-binding positions include 149 to 151 (GLG) and Val215.

The protein belongs to the tetrahydrofolate dehydrogenase/cyclohydrolase family. Homodimer.

The enzyme catalyses (6R)-5,10-methylene-5,6,7,8-tetrahydrofolate + NADP(+) = (6R)-5,10-methenyltetrahydrofolate + NADPH. It carries out the reaction (6R)-5,10-methenyltetrahydrofolate + H2O = (6R)-10-formyltetrahydrofolate + H(+). It participates in one-carbon metabolism; tetrahydrofolate interconversion. Catalyzes the oxidation of 5,10-methylenetetrahydrofolate to 5,10-methenyltetrahydrofolate and then the hydrolysis of 5,10-methenyltetrahydrofolate to 10-formyltetrahydrofolate. The polypeptide is Bifunctional protein FolD (Mycoplasma genitalium (strain ATCC 33530 / DSM 19775 / NCTC 10195 / G37) (Mycoplasmoides genitalium)).